Here is a 377-residue protein sequence, read N- to C-terminus: UPF0754 membrane protein lin2327 (377 aa).

The next 2 membrane-spanning stretches (helical) occupy residues 1–21 (MSVL…GAMT) and 357–377 (YLGG…AMWI).

It belongs to the UPF0754 family.

Its subcellular location is the cell membrane. In Listeria innocua serovar 6a (strain ATCC BAA-680 / CLIP 11262), this protein is UPF0754 membrane protein lin2327.